The following is an 86-amino-acid chain: Large ribosomal subunit protein bL27 (86 aa).

Residues 1-24 form a disordered region; it reads MAHKKAGGSTRNGRDSESKRLGVK.

Belongs to the bacterial ribosomal protein bL27 family.

The polypeptide is Large ribosomal subunit protein bL27 (Alcanivorax borkumensis (strain ATCC 700651 / DSM 11573 / NCIMB 13689 / SK2)).